Consider the following 101-residue polypeptide: NADH-quinone oxidoreductase subunit K (101 aa).

3 helical membrane-spanning segments follow: residues 4–24 (LGHY…GIFL), 30–50 (IVLL…FVAF), and 61–81 (VFVF…LAIL).

Belongs to the complex I subunit 4L family. NDH-1 is composed of 14 different subunits. Subunits NuoA, H, J, K, L, M, N constitute the membrane sector of the complex.

It is found in the cell inner membrane. The catalysed reaction is a quinone + NADH + 5 H(+)(in) = a quinol + NAD(+) + 4 H(+)(out). In terms of biological role, NDH-1 shuttles electrons from NADH, via FMN and iron-sulfur (Fe-S) centers, to quinones in the respiratory chain. The immediate electron acceptor for the enzyme in this species is believed to be ubiquinone. Couples the redox reaction to proton translocation (for every two electrons transferred, four hydrogen ions are translocated across the cytoplasmic membrane), and thus conserves the redox energy in a proton gradient. This chain is NADH-quinone oxidoreductase subunit K, found in Leptothrix cholodnii (strain ATCC 51168 / LMG 8142 / SP-6) (Leptothrix discophora (strain SP-6)).